Consider the following 185-residue polypeptide: Putative lipoprotein LprB (185 aa).

Residues 1-24 (MRRKVRRLTLAVSALVALFPAVAG) form the signal peptide. C25 is lipidated: N-palmitoyl cysteine. A lipid anchor (S-diacylglycerol cysteine) is attached at C25. Residues 26–50 (SDSGDNKPGATIPSTPANAEGRHGP) form a disordered region.

It localises to the cell membrane. This chain is Putative lipoprotein LprB (lprB), found in Mycobacterium bovis (strain ATCC BAA-935 / AF2122/97).